The primary structure comprises 244 residues: tRNA pseudouridine synthase B (244 aa).

Asp-46 (nucleophile) is an active-site residue.

It belongs to the pseudouridine synthase TruB family. Type 1 subfamily.

It carries out the reaction uridine(55) in tRNA = pseudouridine(55) in tRNA. Functionally, responsible for synthesis of pseudouridine from uracil-55 in the psi GC loop of transfer RNAs. This chain is tRNA pseudouridine synthase B, found in Bordetella bronchiseptica (strain ATCC BAA-588 / NCTC 13252 / RB50) (Alcaligenes bronchisepticus).